The chain runs to 452 residues: tRNA modification GTPase MnmE (452 aa).

(6S)-5-formyl-5,6,7,8-tetrahydrofolate-binding residues include Arg21, Glu82, and Arg121. The region spanning 217-373 (GINTTIIGKP…LENKIIEMFN (157 aa)) is the TrmE-type G domain. Asn227 contributes to the K(+) binding site. Residues 227–232 (NVGKSS), 246–252 (TDIPGTT), and 271–274 (DTAG) contribute to the GTP site. Ser231 lines the Mg(2+) pocket. Residues Thr246, Ile248, and Thr251 each contribute to the K(+) site. Thr252 provides a ligand contact to Mg(2+). Lys452 lines the (6S)-5-formyl-5,6,7,8-tetrahydrofolate pocket.

The protein belongs to the TRAFAC class TrmE-Era-EngA-EngB-Septin-like GTPase superfamily. TrmE GTPase family. In terms of assembly, homodimer. Heterotetramer of two MnmE and two MnmG subunits. It depends on K(+) as a cofactor.

The protein resides in the cytoplasm. Its function is as follows. Exhibits a very high intrinsic GTPase hydrolysis rate. Involved in the addition of a carboxymethylaminomethyl (cmnm) group at the wobble position (U34) of certain tRNAs, forming tRNA-cmnm(5)s(2)U34. In Finegoldia magna (strain ATCC 29328 / DSM 20472 / WAL 2508) (Peptostreptococcus magnus), this protein is tRNA modification GTPase MnmE.